The following is an 887-amino-acid chain: Centrobin (887 aa).

The disordered stretch occupies residues 1 to 34; the sequence is MATAAPSPSSPLRPEDLLSDSSEPPGLNQVSSEV. S81 bears the Phosphoserine mark. Disordered regions lie at residues 110–153, 465–486, 566–591, and 636–695; these read MLHT…PSSS, SLRQAASLRDHHRKQLQELSGQ, TLLPPNPQAPLAEPSSPGPLEPEKGE, and LGPP…LPPA. A compositionally biased stretch (basic and acidic residues) spans 113 to 128; that stretch reads TSRDTAYRTGSERREE. Over residues 133 to 153 the composition is skewed to polar residues; that stretch reads SDSTATLLNTRPLQDLSPSSS. Residues 191-557 are a coiled coil; it reads RRKHCERHIQ…LQAMLQAHWE (367 aa). The tract at residues 360–887 is required for centrosome localization; that stretch reads QEHQLKERLQ…SMRSRGGIWR (528 aa). Over residues 670–680 the composition is skewed to basic and acidic residues; sequence TDDHRAERPFP. S782 carries the post-translational modification Phosphoserine. The tract at residues 824 to 887 is disordered; the sequence is GTDGQGELVP…SMRSRGGIWR (64 aa). A compositionally biased stretch (basic and acidic residues) spans 832–849; that stretch reads VPRRNTDSRLGETTRKEI.

Interacts with LYST.

The protein resides in the cytoplasm. It localises to the cytoskeleton. Its subcellular location is the microtubule organizing center. The protein localises to the centrosome. It is found in the centriole. Required for centriole duplication. Inhibition of centriole duplication leading to defects in cytokinesis. The chain is Centrobin (Cntrob) from Mus musculus (Mouse).